We begin with the raw amino-acid sequence, 600 residues long: Elongation factor 4 (600 aa).

In terms of domain architecture, tr-type G spans 5–187 (KYIRNFSIIA…AIVNKLPPPK (183 aa)). Residues 17 to 22 (DHGKST) and 134 to 137 (NKLD) contribute to the GTP site.

It belongs to the TRAFAC class translation factor GTPase superfamily. Classic translation factor GTPase family. LepA subfamily.

The protein localises to the cell inner membrane. It catalyses the reaction GTP + H2O = GDP + phosphate + H(+). In terms of biological role, required for accurate and efficient protein synthesis under certain stress conditions. May act as a fidelity factor of the translation reaction, by catalyzing a one-codon backward translocation of tRNAs on improperly translocated ribosomes. Back-translocation proceeds from a post-translocation (POST) complex to a pre-translocation (PRE) complex, thus giving elongation factor G a second chance to translocate the tRNAs correctly. Binds to ribosomes in a GTP-dependent manner. This chain is Elongation factor 4, found in Rickettsia africae (strain ESF-5).